The primary structure comprises 130 residues: Capsid protein (130 aa).

Positions 31–104 (EWLSNNSRSQ…FAATDDVTVI (74 aa)) are viral RNA-binding.

Belongs to the Leviviricetes capsid protein family. In terms of assembly, homodimer. The capsid proteins form dimers that assemble by group of 5. Twelve such pentamers are linked together with free dimers. The homodimers binds to the viral RNA via an operator hairpin, but also to many other RNA sequences in the viral genome; this interaction probably shifts the virus from the replicative to the assembly phase and ensures specific encapsidation of the viral genome.

It is found in the virion. In terms of biological role, capsid protein self-assembles to form an icosahedral capsid with a T=3 symmetry, about 26 nm in diameter, and consisting of 89 capsid proteins dimers (178 capsid proteins). Involved in viral genome encapsidation through the interaction between a capsid protein dimer and the multiple packaging signals present in the RNA genome. The capsid also contains 1 copy of the A2 maturation protein. Functionally, acts as a translational repressor of viral replicase synthesis late in infection. This latter function is the result of capsid protein interaction with an RNA hairpin which contains the replicase ribosome-binding site. The sequence is that of Capsid protein from Escherichia coli (Bacteriophage JP34).